The following is a 169-amino-acid chain: Thiol peroxidase (169 aa).

Residues 19 to 167 (LKVGDRAPEA…YDEVVNKVKE (149 aa)) form the Thioredoxin domain. C61 functions as the Cysteine sulfenic acid (-SOH) intermediate in the catalytic mechanism. C61 and C95 form a disulfide bridge.

Belongs to the peroxiredoxin family. Tpx subfamily. As to quaternary structure, homodimer.

It carries out the reaction a hydroperoxide + [thioredoxin]-dithiol = an alcohol + [thioredoxin]-disulfide + H2O. Functionally, thiol-specific peroxidase that catalyzes the reduction of hydrogen peroxide and organic hydroperoxides to water and alcohols, respectively. Plays a role in cell protection against oxidative stress by detoxifying peroxides. The chain is Thiol peroxidase from Aquifex aeolicus (strain VF5).